The following is a 75-amino-acid chain: Acylphosphatase-like protein MJ1405 (75 aa).

The 68-residue stretch at 8–75 folds into the Acylphosphatase-like domain; that stretch reads TYEIIIYGRI…TNFWRVRKCK (68 aa).

This chain is Acylphosphatase-like protein MJ1405, found in Methanocaldococcus jannaschii (strain ATCC 43067 / DSM 2661 / JAL-1 / JCM 10045 / NBRC 100440) (Methanococcus jannaschii).